The primary structure comprises 204 residues: Putative copper-binding protein (204 aa).

Cu cation contacts are provided by cysteine 77, cysteine 81, and histidine 166.

The protein belongs to the SCO1/2 family.

The chain is Putative copper-binding protein (scoP) from Stutzerimonas stutzeri (Pseudomonas stutzeri).